The chain runs to 286 residues: Tyrosine recombinase Tlet_1492 (286 aa).

One can recognise a Core-binding (CB) domain in the interval 1–86 (MERILQNFSD…SLRSFFNYLQ (86 aa)). Residues 107-280 (RIPDFLLPSE…VDQEKFDAIN (174 aa)) enclose the Tyr recombinase domain. Residues Arg-143, Lys-168, His-232, Arg-235, and His-258 contribute to the active site. Tyr-267 serves as the catalytic O-(3'-phospho-DNA)-tyrosine intermediate.

The protein belongs to the 'phage' integrase family.

It is found in the cytoplasm. Site-specific tyrosine recombinase, which acts by catalyzing the cutting and rejoining of the recombining DNA molecules. In Pseudothermotoga lettingae (strain ATCC BAA-301 / DSM 14385 / NBRC 107922 / TMO) (Thermotoga lettingae), this protein is Tyrosine recombinase Tlet_1492.